The chain runs to 119 residues: MARVKGGVVSRKRRKRVLKLAKGYYGAKHILFRTAKEQVMNSYYYAYRDRRQRKRDFRKLWITRINAAARMNGLSYSQLMHGLKLAEVEVNRKMLADLAVNDAAAFTVLADAAKEKLGK.

Belongs to the bacterial ribosomal protein bL20 family.

In terms of biological role, binds directly to 23S ribosomal RNA and is necessary for the in vitro assembly process of the 50S ribosomal subunit. It is not involved in the protein synthesizing functions of that subunit. This is Large ribosomal subunit protein bL20 from Streptococcus mutans serotype c (strain ATCC 700610 / UA159).